A 164-amino-acid polypeptide reads, in one-letter code: Putative 4-hydroxy-4-methyl-2-oxoglutarate aldolase (164 aa).

Residues 79–82 (GDRL) and arginine 101 contribute to the substrate site. Residue aspartate 102 participates in a divalent metal cation binding.

This sequence belongs to the class II aldolase/RraA-like family. As to quaternary structure, homotrimer. The cofactor is a divalent metal cation.

It carries out the reaction 4-hydroxy-4-methyl-2-oxoglutarate = 2 pyruvate. The enzyme catalyses oxaloacetate + H(+) = pyruvate + CO2. Functionally, catalyzes the aldol cleavage of 4-hydroxy-4-methyl-2-oxoglutarate (HMG) into 2 molecules of pyruvate. Also contains a secondary oxaloacetate (OAA) decarboxylase activity due to the common pyruvate enolate transition state formed following C-C bond cleavage in the retro-aldol and decarboxylation reactions. The chain is Putative 4-hydroxy-4-methyl-2-oxoglutarate aldolase from Halorhodospira halophila (strain DSM 244 / SL1) (Ectothiorhodospira halophila (strain DSM 244 / SL1)).